The chain runs to 747 residues: MSKLKSSESVRVVVRCRPMNGKEKAASYDKVVDVDVKLGQVSVKNPKGTAHEMPKTFTFDAVYDWNAKQFELYDETFRPLVDSVLQGFNGTIFAYGQTGTGKTYTMEGIRGDPEKRGVIPNSFDHIFTHISRSQNQQYLVRASYLEIYQEEIRDLLSKDQTKRLELKERPDTGVYVKDLSSFVTKSVKEIEHVMNVGNQNRSVGATNMNEHSSRSHAIFVITIECSEVGLDGENHIRVGKLNLVDLAGSERQAKTGAQGERLKEATKINLSLSALGNVISALVDGKSTHIPYRDSKLTRLLQDSLGGNAKTVMVANVGPASYNVEETLTTLRYANRAKNIKNKPRVNEDPKDALLREFQEEIARLKAQLEKRSIGRRKRREKRREGGGSGGGGEEEEEEGEEGEEEGDDKDDYWREQQEKLEIEKRAIVEDHSLVAEEKMRLLKEKEKKMEDLRREKDAAEMLGAKIKAMESKLLVGGKNIVDHTNEQQKILEQKRQEIAEQKRREREIQQQMESRDEETLELKETYSSLQQEVDIKTKKLKKLFSKLQAVKAEIHDLQEEHIKERQELEQTQNELTRELKLKHLIIENFIPLEEKSKIMNRAFFDEEEDHWKLHPITRLENQQMMKRPVSAVGYKRPLSQHARMSMMIRPEARYRAENIVLLELDMPSRTTRDYEGPAIAPKVQAALDAALQDEDEIQVDASSFESTANKKSKARPKSGRKSGSSSSSSGTPASQLYPQSRGLVPK.

Methionine 1 is modified (N-acetylmethionine). Serine 2 carries the N-acetylserine; in Kinesin-like protein KIF3B, N-terminally processed modification. The region spanning 9–340 (SVRVVVRCRP…LRYANRAKNI (332 aa)) is the Kinesin motor domain. 96-103 (GQTGTGKT) is a binding site for ATP. Residues 346–579 (VNEDPKDALL…EQTQNELTRE (234 aa)) adopt a coiled-coil conformation. Disordered regions lie at residues 374 to 412 (IGRR…DKDD) and 699 to 747 (QVDA…LVPK). Residues 393 to 411 (GEEEEEEGEEGEEEGDDKD) are compositionally biased toward acidic residues. The globular stretch occupies residues 580–747 (LKLKHLIIEN…YPQSRGLVPK (168 aa)). Polar residues predominate over residues 701-710 (DASSFESTAN). The span at 711–721 (KKSKARPKSGR) shows a compositional bias: basic residues. Residues 722-735 (KSGSSSSSSGTPAS) are compositionally biased toward low complexity.

It belongs to the TRAFAC class myosin-kinesin ATPase superfamily. Kinesin family. Kinesin II subfamily. Heterodimer of KIF3A and KIF3B. KIF3A/KIF3B heterodimer interacts with KIFAP3 forming a heterotrimeric (KIF3A/KIF3B/KIFAP3) complex. Interacts directly with IFT20. Interacts with the SMC3 subunit of the cohesin complex. Interacts with FLCN.

Its subcellular location is the cytoplasm. It is found in the cytoskeleton. The protein localises to the cell projection. The protein resides in the cilium. It localises to the dendritic spine. In terms of biological role, microtubule-based molecular motor that transport intracellular cargos, such as vesicles, organelles and protein complexes. Uses ATP hydrolysis to generate force to bind and move along the microtubule. Plays a role in cilia formation. Involved in photoreceptor integrity and opsin trafficking in rod photoreceptors. Transports vesicles containing N-methyl-D-aspartate (NMDA) receptor subunit GRIN2A into neuronal dendrites. This Homo sapiens (Human) protein is Kinesin-like protein KIF3B (KIF3B).